A 388-amino-acid chain; its full sequence is Succinate--CoA ligase [ADP-forming] subunit beta (388 aa).

An ATP-grasp domain is found at 9–245; sequence KELLASYGLP…KSQENERELK (237 aa). Residues Lys46, 53-55, Glu100, Tyr103, and Glu108 contribute to the ATP site; that span reads GRG. Positions 200 and 214 each coordinate Mg(2+). Residues Asn265 and 322–324 each bind substrate; that span reads GIV.

This sequence belongs to the succinate/malate CoA ligase beta subunit family. In terms of assembly, heterotetramer of two alpha and two beta subunits. Mg(2+) is required as a cofactor.

It carries out the reaction succinate + ATP + CoA = succinyl-CoA + ADP + phosphate. The enzyme catalyses GTP + succinate + CoA = succinyl-CoA + GDP + phosphate. Its pathway is carbohydrate metabolism; tricarboxylic acid cycle; succinate from succinyl-CoA (ligase route): step 1/1. Functionally, succinyl-CoA synthetase functions in the citric acid cycle (TCA), coupling the hydrolysis of succinyl-CoA to the synthesis of either ATP or GTP and thus represents the only step of substrate-level phosphorylation in the TCA. The beta subunit provides nucleotide specificity of the enzyme and binds the substrate succinate, while the binding sites for coenzyme A and phosphate are found in the alpha subunit. The polypeptide is Succinate--CoA ligase [ADP-forming] subunit beta (Neisseria gonorrhoeae (strain ATCC 700825 / FA 1090)).